A 431-amino-acid chain; its full sequence is Enolase (431 aa).

Gln-167 lines the (2R)-2-phosphoglycerate pocket. Glu-209 (proton donor) is an active-site residue. Mg(2+) contacts are provided by Asp-246, Glu-290, and Asp-317. (2R)-2-phosphoglycerate-binding residues include Lys-342, Arg-371, Ser-372, and Lys-393. The active-site Proton acceptor is Lys-342.

This sequence belongs to the enolase family. As to quaternary structure, component of the RNA degradosome, a multiprotein complex involved in RNA processing and mRNA degradation. It depends on Mg(2+) as a cofactor.

It localises to the cytoplasm. The protein resides in the secreted. It is found in the cell surface. It catalyses the reaction (2R)-2-phosphoglycerate = phosphoenolpyruvate + H2O. It participates in carbohydrate degradation; glycolysis; pyruvate from D-glyceraldehyde 3-phosphate: step 4/5. Catalyzes the reversible conversion of 2-phosphoglycerate (2-PG) into phosphoenolpyruvate (PEP). It is essential for the degradation of carbohydrates via glycolysis. The polypeptide is Enolase (Pectobacterium atrosepticum (strain SCRI 1043 / ATCC BAA-672) (Erwinia carotovora subsp. atroseptica)).